Consider the following 542-residue polypeptide: MSVQKEEYDIVEKAQLSVSAESLTSDSESISHNPFDDFHKAERWRKVYESSGYEGLSKFDPEFTWTKDEEKKLVRKMDLKIFLWVFIMFAFLDLIRKNIARAVSDNFIVDLKMNTNDYNLGQTVYLVIFLASELPGNLLSKRFGPERVIPVQIVLWSVICITQAGLKNRGQFIATRCLLGMVQGGFIPDNILYLSYYYTGAELTFRLSFFWCAIPLFQILGSLLASGIIEMRGIHNLAGWQYLFIIEGFLSLSVGVASFYLMRRGPTQTGESAFHKGKSLFTEYEEKIMVNRILRDDPSKGDMSNRQPVTFKEILYTLTEFDLWPLFIQGITAFISLQTVGSYLSLILKSLNYSTFLSNILAIPGQALLLINLPLAALLSRKLKEKSLCVGIANVWVLPFIVSLVALPTDTNPWIKYILLTGILGLPYTHSILAGWVSEISNSVRSRTVGTALYNMSAQVGAIIASNMYRNDDKPYYTRGNKILLGFTCFNICMAVATKFYYISRNKYKDRKWNSMTKEEQINYLDTTKDKGMKRLDYRFIH.

Residues M1–D78 lie on the Extracellular side of the membrane. The helical transmembrane segment at L79–I99 threads the bilayer. At A100–N119 the chain is on the cytoplasmic side. A helical transmembrane segment spans residues L120–S140. At K141–R147 the chain is on the extracellular side. Residues V148–N168 traverse the membrane as a helical segment. Over R169 to R176 the chain is Cytoplasmic. The helical transmembrane segment at C177–Y197 threads the bilayer. Topologically, residues Y198–S208 are extracellular. The helical transmembrane segment at F209–I229 threads the bilayer. Residues E230–Q241 are Cytoplasmic-facing. Residues Y242–M262 form a helical membrane-spanning segment. At R263 to L326 the chain is on the extracellular side. The helical transmembrane segment at F327–I347 threads the bilayer. Residues L348–N359 lie on the Cytoplasmic side of the membrane. A helical transmembrane segment spans residues I360 to S380. Topologically, residues R381–S387 are extracellular. The helical transmembrane segment at L388 to P408 threads the bilayer. The Cytoplasmic segment spans residues T409–K416. The helical transmembrane segment at Y417–V437 threads the bilayer. The Extracellular portion of the chain corresponds to S438–K482. Residues I483–I503 form a helical membrane-spanning segment. The Cytoplasmic segment spans residues S504–H542.

The protein belongs to the major facilitator superfamily. Allantoate permease family.

The protein localises to the membrane. This is an uncharacterized protein from Saccharomyces cerevisiae (strain ATCC 204508 / S288c) (Baker's yeast).